The chain runs to 170 residues: Inosine/xanthosine triphosphatase (170 aa).

The protein belongs to the YjjX NTPase family. In terms of assembly, homodimer. Requires Mg(2+) as cofactor. It depends on Mn(2+) as a cofactor.

The enzyme catalyses XTP + H2O = XDP + phosphate + H(+). It catalyses the reaction ITP + H2O = IDP + phosphate + H(+). Its function is as follows. Phosphatase that hydrolyzes non-canonical purine nucleotides such as XTP and ITP to their respective diphosphate derivatives. Probably excludes non-canonical purines from DNA/RNA precursor pool, thus preventing their incorporation into DNA/RNA and avoiding chromosomal lesions. The protein is Inosine/xanthosine triphosphatase of Aliivibrio fischeri (strain MJ11) (Vibrio fischeri).